Consider the following 480-residue polypeptide: Cytochrome b-c1 complex subunit 1, mitochondrial (480 aa).

A mitochondrion-targeting transit peptide spans 1–34 (MAASAVCRAACSGTQALLRTCRSPALLRLPALRG). Residues Lys111 and Lys138 each carry the N6-acetyllysine modification. N6-acetyllysine; alternate is present on Lys163. An N6-succinyllysine; alternate modification is found at Lys163. Phosphoserine is present on Ser212. Thr214 bears the Phosphothreonine mark.

Belongs to the peptidase M16 family. UQCRC1/QCR1 subfamily. As to quaternary structure, component of the ubiquinol-cytochrome c oxidoreductase (cytochrome b-c1 complex, complex III, CIII), a multisubunit enzyme composed of 11 subunits. The complex is composed of 3 respiratory subunits cytochrome b, cytochrome c1 and Rieske protein UQCRFS1, 2 core protein subunits UQCRC1/QCR1 and UQCRC2/QCR2, and 6 low-molecular weight protein subunits UQCRH/QCR6, UQCRB/QCR7, UQCRQ/QCR8, UQCR10/QCR9, UQCR11/QCR10 and subunit 9, the cleavage product of Rieske protein UQCRFS1. The complex exists as an obligatory dimer and forms supercomplexes (SCs) in the inner mitochondrial membrane with NADH-ubiquinone oxidoreductase (complex I, CI) and cytochrome c oxidase (complex IV, CIV), resulting in different assemblies (supercomplex SCI(1)III(2)IV(1) and megacomplex MCI(2)III(2)IV(2)). Interacts with UQCC6. Interacts with STMP1.

It is found in the mitochondrion inner membrane. In terms of biological role, component of the ubiquinol-cytochrome c oxidoreductase, a multisubunit transmembrane complex that is part of the mitochondrial electron transport chain which drives oxidative phosphorylation. The respiratory chain contains 3 multisubunit complexes succinate dehydrogenase (complex II, CII), ubiquinol-cytochrome c oxidoreductase (cytochrome b-c1 complex, complex III, CIII) and cytochrome c oxidase (complex IV, CIV), that cooperate to transfer electrons derived from NADH and succinate to molecular oxygen, creating an electrochemical gradient over the inner membrane that drives transmembrane transport and the ATP synthase. The cytochrome b-c1 complex catalyzes electron transfer from ubiquinol to cytochrome c, linking this redox reaction to translocation of protons across the mitochondrial inner membrane, with protons being carried across the membrane as hydrogens on the quinol. In the process called Q cycle, 2 protons are consumed from the matrix, 4 protons are released into the intermembrane space and 2 electrons are passed to cytochrome c. The 2 core subunits UQCRC1/QCR1 and UQCRC2/QCR2 are homologous to the 2 mitochondrial-processing peptidase (MPP) subunits beta-MPP and alpha-MPP respectively, and they seem to have preserved their MPP processing properties. May be involved in the in situ processing of UQCRFS1 into the mature Rieske protein and its mitochondrial targeting sequence (MTS)/subunit 9 when incorporated into complex III. Seems to play an important role in the maintenance of proper mitochondrial function in nigral dopaminergic neurons. This Rattus norvegicus (Rat) protein is Cytochrome b-c1 complex subunit 1, mitochondrial (Uqcrc1).